The chain runs to 160 residues: Cytosolic iron-sulfur assembly component 2A (160 aa).

Zn(2+)-binding residues include H89, H123, E150, and E153.

The protein belongs to the MIP18 family. Monomer and homodimer. Component of the CIA complex. Interacts with CIAO1. Interacts with IREB2. Interacts with APAF1. Substantially enriched in macrophages.

The protein localises to the cytoplasm. Component of the cytosolic iron-sulfur protein assembly (CIA) complex, a multiprotein complex that mediates the incorporation of iron-sulfur cluster into extramitochondrial Fe/S proteins. As a CIA complex component and in collaboration with CIAO1 specifically matures ACO1 and stabilizes IREB2, connecting cytosolic iron-sulfur protein maturation with cellular iron regulation. May play a role in chromosome segregation through establishment of sister chromatid cohesion. May induce apoptosis in collaboration with APAF1. The chain is Cytosolic iron-sulfur assembly component 2A from Homo sapiens (Human).